Reading from the N-terminus, the 78-residue chain is Acyl carrier protein (78 aa).

A Carrier domain is found at 4-78 (AEIRDKVYDI…QQAIDYIVKK (75 aa)). An O-(pantetheine 4'-phosphoryl)serine modification is found at Ser39.

It belongs to the acyl carrier protein (ACP) family. 4'-phosphopantetheine is transferred from CoA to a specific serine of apo-ACP by AcpS. This modification is essential for activity because fatty acids are bound in thioester linkage to the sulfhydryl of the prosthetic group.

The protein resides in the cytoplasm. The protein operates within lipid metabolism; fatty acid biosynthesis. Functionally, carrier of the growing fatty acid chain in fatty acid biosynthesis. The protein is Acyl carrier protein of Chlorobium luteolum (strain DSM 273 / BCRC 81028 / 2530) (Pelodictyon luteolum).